Reading from the N-terminus, the 64-residue chain is Protein translocase subunit SecE (64 aa).

A helical membrane pass occupies residues 35–55 (LVVLGTVAFITVFFAVVDYGI).

The protein belongs to the SecE/SEC61-gamma family. Component of the Sec protein translocase complex. Heterotrimer consisting of SecY, SecE and SecG subunits. The heterotrimers can form oligomers, although 1 heterotrimer is thought to be able to translocate proteins. Interacts with the ribosome. Interacts with SecDF, and other proteins may be involved. Interacts with SecA.

The protein localises to the cell membrane. Essential subunit of the Sec protein translocation channel SecYEG. Clamps together the 2 halves of SecY. May contact the channel plug during translocation. This Halalkalibacterium halodurans (strain ATCC BAA-125 / DSM 18197 / FERM 7344 / JCM 9153 / C-125) (Bacillus halodurans) protein is Protein translocase subunit SecE.